A 113-amino-acid chain; its full sequence is Large ribosomal subunit protein bL19 (113 aa).

The protein belongs to the bacterial ribosomal protein bL19 family.

In terms of biological role, this protein is located at the 30S-50S ribosomal subunit interface and may play a role in the structure and function of the aminoacyl-tRNA binding site. The polypeptide is Large ribosomal subunit protein bL19 (Natranaerobius thermophilus (strain ATCC BAA-1301 / DSM 18059 / JW/NM-WN-LF)).